Here is a 475-residue protein sequence, read N- to C-terminus: Citrate synthase, mitochondrial (475 aa).

Residues H310, H356, and D411 contribute to the active site.

It belongs to the citrate synthase family.

It localises to the mitochondrion matrix. The catalysed reaction is oxaloacetate + acetyl-CoA + H2O = citrate + CoA + H(+). The protein operates within carbohydrate metabolism; tricarboxylic acid cycle; isocitrate from oxaloacetate: step 1/2. The polypeptide is Citrate synthase, mitochondrial (cit-1) (Aspergillus niger).